Consider the following 276-residue polypeptide: Formamidopyrimidine-DNA glycosylase (276 aa).

Pro-2 (schiff-base intermediate with DNA) is an active-site residue. Residue Glu-3 is the Proton donor of the active site. The active-site Proton donor; for beta-elimination activity is Lys-59. Residues His-93, Arg-112, and Arg-155 each coordinate DNA. An FPG-type zinc finger spans residues 240 to 274 (QVYNREGKPCPRCGDKIAKKKVGGRSSYYCPTCQK). The Proton donor; for delta-elimination activity role is filled by Arg-264.

Belongs to the FPG family. Monomer. Zn(2+) is required as a cofactor.

It catalyses the reaction Hydrolysis of DNA containing ring-opened 7-methylguanine residues, releasing 2,6-diamino-4-hydroxy-5-(N-methyl)formamidopyrimidine.. The enzyme catalyses 2'-deoxyribonucleotide-(2'-deoxyribose 5'-phosphate)-2'-deoxyribonucleotide-DNA = a 3'-end 2'-deoxyribonucleotide-(2,3-dehydro-2,3-deoxyribose 5'-phosphate)-DNA + a 5'-end 5'-phospho-2'-deoxyribonucleoside-DNA + H(+). Functionally, involved in base excision repair of DNA damaged by oxidation or by mutagenic agents. Acts as a DNA glycosylase that recognizes and removes damaged bases. Has a preference for oxidized purines, such as 7,8-dihydro-8-oxoguanine (8-oxoG). Has AP (apurinic/apyrimidinic) lyase activity and introduces nicks in the DNA strand. Cleaves the DNA backbone by beta-delta elimination to generate a single-strand break at the site of the removed base with both 3'- and 5'-phosphates. In Pelotomaculum thermopropionicum (strain DSM 13744 / JCM 10971 / SI), this protein is Formamidopyrimidine-DNA glycosylase.